The primary structure comprises 134 residues: uncharacterized protein (134 aa).

A helical membrane pass occupies residues 13 to 35; the sequence is FFIAFSAYLVVILLMTAVSVYYL.

It is found in the membrane. This is an uncharacterized protein from Archaeoglobus fulgidus (strain ATCC 49558 / DSM 4304 / JCM 9628 / NBRC 100126 / VC-16).